A 171-amino-acid polypeptide reads, in one-letter code: Transcriptional repressor NrdR (171 aa).

Residues 1-10 (MQCPHCHHNG) show a composition bias toward basic residues. A disordered region spans residues 1 to 21 (MQCPHCHHNGSRVVDSRPTDD). A zinc finger lies at 3–34 (CPHCHHNGSRVVDSRPTDDGRVIRRRRECENC). The region spanning 49 to 139 (LLVIKKNGAR…VYRQFKDMHV (91 aa)) is the ATP-cone domain. Positions 152–171 (KVKLAKPSAKTTHAPKRKKD) are disordered.

Belongs to the NrdR family. Zn(2+) serves as cofactor.

Functionally, negatively regulates transcription of bacterial ribonucleotide reductase nrd genes and operons by binding to NrdR-boxes. The chain is Transcriptional repressor NrdR from Lactiplantibacillus plantarum (strain ATCC BAA-793 / NCIMB 8826 / WCFS1) (Lactobacillus plantarum).